The chain runs to 507 residues: Maturase K (507 aa).

It belongs to the intron maturase 2 family. MatK subfamily.

It is found in the plastid. The protein localises to the chloroplast. Usually encoded in the trnK tRNA gene intron. Probably assists in splicing its own and other chloroplast group II introns. The sequence is that of Maturase K from Lyonia lucida (Fetterbush).